The sequence spans 500 residues: Chromosomal replication initiator protein DnaA (500 aa).

The interval 1–81 (MVNASGDPVI…LQALRTVTGE (81 aa)) is domain I, interacts with DnaA modulators. Positions 81 to 155 (ENMFPAFKVV…QQKMNRDPET (75 aa)) are domain II. Residues 156–377 (HLNKNFTFDS…GALTRVTAVA (222 aa)) form a domain III, AAA+ region region. Residues G200, G202, K203, and T204 each contribute to the ATP site. A domain IV, binds dsDNA region spans residues 378–500 (SLSNQPVTRA…TVRLKQSNTN (123 aa)).

This sequence belongs to the DnaA family. In terms of assembly, oligomerizes as a right-handed, spiral filament on DNA at oriC.

The protein localises to the cytoplasm. Functionally, plays an essential role in the initiation and regulation of chromosomal replication. ATP-DnaA binds to the origin of replication (oriC) to initiate formation of the DNA replication initiation complex once per cell cycle. Binds the DnaA box (a 9 base pair repeat at the origin) and separates the double-stranded (ds)DNA. Forms a right-handed helical filament on oriC DNA; dsDNA binds to the exterior of the filament while single-stranded (ss)DNA is stabiized in the filament's interior. The ATP-DnaA-oriC complex binds and stabilizes one strand of the AT-rich DNA unwinding element (DUE), permitting loading of DNA polymerase. After initiation quickly degrades to an ADP-DnaA complex that is not apt for DNA replication. Binds acidic phospholipids. The sequence is that of Chromosomal replication initiator protein DnaA from Bifidobacterium longum (strain DJO10A).